We begin with the raw amino-acid sequence, 123 residues long: Small ribosomal subunit protein uS12cz/uS12cy (123 aa).

This sequence belongs to the universal ribosomal protein uS12 family. Part of the 30S ribosomal subunit.

The protein resides in the plastid. It is found in the chloroplast. Its function is as follows. With S4 and S5 plays an important role in translational accuracy. Located at the interface of the 30S and 50S subunits. This Drimys granadensis protein is Small ribosomal subunit protein uS12cz/uS12cy (rps12-A).